The chain runs to 326 residues: Microtubule-associated protein RP/EB family member 2 (326 aa).

Serine 9 carries the phosphoserine modification. The 103-residue stretch at 56–158 (TMSRHDIIAW…FIQWFKKFYD (103 aa)) folds into the Calponin-homology (CH) domain. Phosphotyrosine is present on tyrosine 166. Disordered stretches follow at residues 170–239 (EARQ…DKDL) and 298–326 (ASDE…QEEY). A DCTN1-binding region spans residues 186-326 (QIFNLPKKSH…EQQPQQQEEY (141 aa)). The span at 199 to 233 (SPTAGAAKSSPASKPGSTPSRPSSAKRASSSGSAS) shows a compositional bias: low complexity. Residues serine 218 and serine 235 each carry the phosphoserine modification. The EB1 C-terminal domain occupies 235 to 305 (SDKDLETQVI…LYASDEHEGH (71 aa)). The APC-binding stretch occupies residues 258 to 301 (EGVEKERDFYFGKLREIELLCQEHGQENDDLVQRLMDVLYASDE). Residues 299–316 (SDEHEGHPEEPEAEEQVH) are compositionally biased toward basic and acidic residues. Residues 317 to 326 (EQQPQQQEEY) show a composition bias toward low complexity.

Belongs to the MAPRE family. As to quaternary structure, interacts with DCTN1. Interacts with APC (via C-terminal). Interacts with monomeric and polymerized tubulin. Interacts with SLAIN1. Interacts (via the N-terminal region) with BAG1. Interacts with ASB14. Interacts with HAX1; this interaction is essential for epidermal cell migration. Post-translationally, phosphorylated at Ser-235 by CK2 leading to enhanced cell adhesion. Phosphorylated by CDK1 and AURKB during mitosis reduces the binding affinity of MAPRE2 for microtubules. Ubiquitinated in an ASB14-dependent manner; leading to proteasomal degradation.

It localises to the cytoplasm. Its subcellular location is the cytoskeleton. Adapter protein that is involved in microtubule polymerization, and spindle function by stabilizing microtubules and anchoring them at centrosomes. Therefore, ensures mitotic progression and genome stability. Acts as a central regulator of microtubule reorganization in apico-basal epithelial differentiation. Plays a role during oocyte meiosis by regulating microtubule dynamics. Participates in neurite growth by interacting with plexin B3/PLXNB3 and microtubule reorganization during apico-basal epithelial differentiation. Also plays an essential role for cell migration and focal adhesion dynamics. Mechanistically, recruits HAX1 to microtubules in order to regulate focal adhesion dynamics. The protein is Microtubule-associated protein RP/EB family member 2 (MAPRE2) of Bos taurus (Bovine).